We begin with the raw amino-acid sequence, 786 residues long: Constitutive coactivator of peroxisome proliferator-activated receptor gamma (786 aa).

The tract at residues 1–561 (MGVRGLQGFV…GTPSLEVLWL (561 aa)) is mediates transactivation of PPARG. Disordered stretches follow at residues 371–413 (PNQE…KLPS) and 738–786 (HWDS…WRRY). Residues 750-771 (QGYSSYRTDSTHGHSGQSWRNQ) are compositionally biased toward polar residues.

The protein belongs to the constitutive coactivator of PPAR-gamma family. In terms of assembly, interacts with ESR1 and RXRA. Interacts with PPARG; in a ligand-independent manner. Ubiquitously expressed (at protein level).

Its subcellular location is the nucleus. Functions as a transactivator of PPARG and ESR1. Functions in adipogenesis through PPARG activation. The sequence is that of Constitutive coactivator of peroxisome proliferator-activated receptor gamma (Fam120b) from Mus musculus (Mouse).